The sequence spans 379 residues: Lipid-A-disaccharide synthase (379 aa).

It belongs to the LpxB family.

It carries out the reaction a lipid X + a UDP-2-N,3-O-bis[(3R)-3-hydroxyacyl]-alpha-D-glucosamine = a lipid A disaccharide + UDP + H(+). The protein operates within bacterial outer membrane biogenesis; LPS lipid A biosynthesis. Condensation of UDP-2,3-diacylglucosamine and 2,3-diacylglucosamine-1-phosphate to form lipid A disaccharide, a precursor of lipid A, a phosphorylated glycolipid that anchors the lipopolysaccharide to the outer membrane of the cell. This is Lipid-A-disaccharide synthase from Vibrio parahaemolyticus serotype O3:K6 (strain RIMD 2210633).